The following is a 120-amino-acid chain: Large ribosomal subunit protein uL18c (120 aa).

Belongs to the universal ribosomal protein uL18 family. In terms of assembly, part of the 50S ribosomal subunit; contacts the 5S rRNA.

The protein resides in the plastid. It localises to the chloroplast. Functionally, binds 5S rRNA, forms part of the central protuberance of the 50S subunit. This chain is Large ribosomal subunit protein uL18c (rpl18), found in Pyropia yezoensis (Susabi-nori).